The following is a 375-amino-acid chain: GDP-mannose transporter GONST2 (375 aa).

9 helical membrane passes run 79–99 (LVSG…NKIV), 112–132 (MLYQ…SGVV), 141–161 (LIRV…SGMY), 165–185 (YINV…TGIG), 199–219 (WAAM…DLTF), 262–282 (MVLL…ILLG), 300–320 (VVAT…MWFL), 327–347 (TYSL…LVLF), and 349–369 (VPLS…GVVF).

It belongs to the nucleotide-sugar transporter family. GDP-Mannose:GMP antiporter (GMA) (TC 2.A.7.13) subfamily. In terms of tissue distribution, expressed in rosette leaves, stems, flowers and siliques.

Its subcellular location is the golgi apparatus membrane. In terms of biological role, GDP-mannose transporter that may be involved in the import of GDP-mannose from the cytoplasm into the Golgi lumen. This Arabidopsis thaliana (Mouse-ear cress) protein is GDP-mannose transporter GONST2.